Here is a 211-residue protein sequence, read N- to C-terminus: Thymidylate kinase (211 aa).

12 to 19 (GIDGSGKS) provides a ligand contact to ATP.

The protein belongs to the thymidylate kinase family.

It catalyses the reaction dTMP + ATP = dTDP + ADP. Phosphorylation of dTMP to form dTDP in both de novo and salvage pathways of dTTP synthesis. The polypeptide is Thymidylate kinase (Ruegeria pomeroyi (strain ATCC 700808 / DSM 15171 / DSS-3) (Silicibacter pomeroyi)).